A 137-amino-acid chain; its full sequence is ATP synthase epsilon chain (137 aa).

This sequence belongs to the ATPase epsilon chain family. As to quaternary structure, F-type ATPases have 2 components, CF(1) - the catalytic core - and CF(0) - the membrane proton channel. CF(1) has five subunits: alpha(3), beta(3), gamma(1), delta(1), epsilon(1). CF(0) has three main subunits: a, b and c.

The protein localises to the cell membrane. Functionally, produces ATP from ADP in the presence of a proton gradient across the membrane. The sequence is that of ATP synthase epsilon chain from Streptococcus agalactiae serotype III (strain NEM316).